Reading from the N-terminus, the 259-residue chain is 3-oxo-5-alpha-steroid 4-dehydrogenase 1 (259 aa).

5 helical membrane-spanning segments follow: residues 12-29 (LLAA…AVFA), 86-106 (ILLA…PFLM), 111-131 (PMPL…GYLQ), 151-171 (FLIG…SDHI), and 209-229 (YALA…FCFL).

Belongs to the steroid 5-alpha reductase family. As to expression, liver and prostate (at a low level).

Its subcellular location is the microsome membrane. It is found in the endoplasmic reticulum membrane. The enzyme catalyses a 3-oxo-5alpha-steroid + NADP(+) = a 3-oxo-Delta(4)-steroid + NADPH + H(+). It catalyses the reaction androst-4-ene-3,17-dione + NADPH + H(+) = 5alpha-androstan-3,17-dione + NADP(+). It carries out the reaction 5alpha-pregnane-3,20-dione + NADP(+) = progesterone + NADPH + H(+). The catalysed reaction is 17beta-hydroxy-5alpha-androstan-3-one + NADP(+) = testosterone + NADPH + H(+). Its function is as follows. Converts testosterone into 5-alpha-dihydrotestosterone and progesterone or corticosterone into their corresponding 5-alpha-3-oxosteroids. It plays a central role in sexual differentiation and androgen physiology. The sequence is that of 3-oxo-5-alpha-steroid 4-dehydrogenase 1 from Homo sapiens (Human).